A 37-amino-acid chain; its full sequence is Large ribosomal subunit protein bL36 (37 aa).

This sequence belongs to the bacterial ribosomal protein bL36 family.

In Nitratidesulfovibrio vulgaris (strain DSM 19637 / Miyazaki F) (Desulfovibrio vulgaris), this protein is Large ribosomal subunit protein bL36.